We begin with the raw amino-acid sequence, 78 residues long: DNA-directed RNA polymerase subunit omega (78 aa).

This sequence belongs to the RNA polymerase subunit omega family. As to quaternary structure, in cyanobacteria the RNAP catalytic core is composed of 2 alpha, 1 beta, 1 beta', 1 gamma and 1 omega subunit. When a sigma factor is associated with the core the holoenzyme is formed, which can initiate transcription.

The enzyme catalyses RNA(n) + a ribonucleoside 5'-triphosphate = RNA(n+1) + diphosphate. Promotes RNA polymerase assembly. Latches the N- and C-terminal regions of the beta' subunit thereby facilitating its interaction with the beta and alpha subunits. This chain is DNA-directed RNA polymerase subunit omega, found in Prochlorococcus marinus subsp. pastoris (strain CCMP1986 / NIES-2087 / MED4).